We begin with the raw amino-acid sequence, 93 residues long: Beta-defensin 128 (93 aa).

The N-terminal stretch at 1–18 (MKLFLVLIILLFEVLTDG) is a signal peptide. 3 cysteine pairs are disulfide-bonded: C24-C52, C32-C46, and C36-C53.

It belongs to the beta-defensin family.

The protein localises to the secreted. In terms of biological role, has antibacterial activity. In Homo sapiens (Human), this protein is Beta-defensin 128 (DEFB128).